The following is a 129-amino-acid chain: Glycine cleavage system H protein (129 aa).

Positions 24-106 (TYTVGITEHA…YTDGWIFKIR (83 aa)) constitute a Lipoyl-binding domain. The residue at position 65 (Lys-65) is an N6-lipoyllysine.

Belongs to the GcvH family. In terms of assembly, the glycine cleavage system is composed of four proteins: P, T, L and H. It depends on (R)-lipoate as a cofactor.

In terms of biological role, the glycine cleavage system catalyzes the degradation of glycine. The H protein shuttles the methylamine group of glycine from the P protein to the T protein. This chain is Glycine cleavage system H protein, found in Enterobacter sp. (strain 638).